The sequence spans 550 residues: Glucose-6-phosphate isomerase (550 aa).

Residue Glu356 is the Proton donor of the active site. Active-site residues include His387 and Lys515.

Belongs to the GPI family.

It is found in the cytoplasm. The catalysed reaction is alpha-D-glucose 6-phosphate = beta-D-fructose 6-phosphate. It functions in the pathway carbohydrate biosynthesis; gluconeogenesis. The protein operates within carbohydrate degradation; glycolysis; D-glyceraldehyde 3-phosphate and glycerone phosphate from D-glucose: step 2/4. Its function is as follows. Catalyzes the reversible isomerization of glucose-6-phosphate to fructose-6-phosphate. The chain is Glucose-6-phosphate isomerase from Vibrio cholerae serotype O1 (strain ATCC 39315 / El Tor Inaba N16961).